Reading from the N-terminus, the 180-residue chain is Large ribosomal subunit protein uL6 (180 aa).

It belongs to the universal ribosomal protein uL6 family. As to quaternary structure, part of the 50S ribosomal subunit.

In terms of biological role, this protein binds to the 23S rRNA, and is important in its secondary structure. It is located near the subunit interface in the base of the L7/L12 stalk, and near the tRNA binding site of the peptidyltransferase center. In Flavobacterium johnsoniae (strain ATCC 17061 / DSM 2064 / JCM 8514 / BCRC 14874 / CCUG 350202 / NBRC 14942 / NCIMB 11054 / UW101) (Cytophaga johnsonae), this protein is Large ribosomal subunit protein uL6.